The sequence spans 145 residues: D-aminoacyl-tRNA deacylase (145 aa).

The short motif at Gly-137 to Pro-138 is the Gly-cisPro motif, important for rejection of L-amino acids element.

The protein belongs to the DTD family. As to quaternary structure, homodimer.

It is found in the cytoplasm. The catalysed reaction is glycyl-tRNA(Ala) + H2O = tRNA(Ala) + glycine + H(+). It catalyses the reaction a D-aminoacyl-tRNA + H2O = a tRNA + a D-alpha-amino acid + H(+). In terms of biological role, an aminoacyl-tRNA editing enzyme that deacylates mischarged D-aminoacyl-tRNAs. Also deacylates mischarged glycyl-tRNA(Ala), protecting cells against glycine mischarging by AlaRS. Acts via tRNA-based rather than protein-based catalysis; rejects L-amino acids rather than detecting D-amino acids in the active site. By recycling D-aminoacyl-tRNA to D-amino acids and free tRNA molecules, this enzyme counteracts the toxicity associated with the formation of D-aminoacyl-tRNA entities in vivo and helps enforce protein L-homochirality. In Shewanella sediminis (strain HAW-EB3), this protein is D-aminoacyl-tRNA deacylase.